A 483-amino-acid chain; its full sequence is Trigger factor (483 aa).

Positions 166 to 251 (TDTVNIDYVG…INDVFTKEKP (86 aa)) constitute a PPIase FKBP-type domain. Residues 435–460 (GEEPKLSTTKKVVEPTEEKTRKDSKM) are compositionally biased toward basic and acidic residues. Positions 435-483 (GEEPKLSTTKKVVEPTEEKTRKDSKMSTKKPAAKPAAKPAAATKKPVKK) are disordered. Low complexity predominate over residues 467–483 (AKPAAKPAAATKKPVKK).

This sequence belongs to the FKBP-type PPIase family. Tig subfamily.

The protein resides in the cytoplasm. It catalyses the reaction [protein]-peptidylproline (omega=180) = [protein]-peptidylproline (omega=0). Involved in protein export. Acts as a chaperone by maintaining the newly synthesized protein in an open conformation. Functions as a peptidyl-prolyl cis-trans isomerase. The protein is Trigger factor of Mycoplasma mobile (strain ATCC 43663 / 163K / NCTC 11711) (Mesomycoplasma mobile).